We begin with the raw amino-acid sequence, 409 residues long: 23S rRNA (uracil(747)-C(5))-methyltransferase (409 aa).

The [4Fe-4S] cluster site is built by cysteine 61, cysteine 67, cysteine 70, and cysteine 137. Positions 251, 277, 298, and 339 each coordinate S-adenosyl-L-methionine. The Nucleophile role is filled by cysteine 365.

The protein belongs to the class I-like SAM-binding methyltransferase superfamily. RNA M5U methyltransferase family.

It carries out the reaction uridine(747) in 23S rRNA + S-adenosyl-L-methionine = 5-methyluridine(747) in 23S rRNA + S-adenosyl-L-homocysteine + H(+). In terms of biological role, catalyzes the formation of 5-methyl-uridine at position equivalent to 747 (m5U747) in 23S rRNA. The polypeptide is 23S rRNA (uracil(747)-C(5))-methyltransferase (Pyrococcus furiosus (strain ATCC 43587 / DSM 3638 / JCM 8422 / Vc1)).